A 499-amino-acid polypeptide reads, in one-letter code: MFCHLRPLRRFGLRKVLPHWLHYSRALSGAEAINALRPFYFAVHPDFFGQHPREREVNENSLKRLSVYLENLQKPGFKSLKPTQLTFYIREKTAQNSSEGQEPISTTGFRAVRFTLHSSDLLSTVLYILNSCSLPVEHVQSLNTNVHSQPLKEATGMPDRPIKWHRSYYSFTGFKDPDEDLTHVSRVETTLTSWLGSNGKGAVKKLRNSLPLRKELDRLKNELSELLQLSDIRWQRGWGVAHRCSQLHSLSRLAQQNPGPLQNVKGCTVVFTDRSGMSALGHVMLGTMDVHHHWTRLFESLPSYFDLQRRMSALEAQISNLLGGIQVVYIEELQPALTLDQYYSLLHTFYNQLLRSRVPPHPHPQSLSGLQMILSSDRYAPSLHELGHFDIPALSDPASLQSFMRTKAQQARENMTRREKLKVMENELIQASTKQFSLEKLYKEPSISSRQMVDCCKRLLEQSLPYLHGMHLCVSHFYSVMQDGDLCIPWNWKKGEAMK.

A coiled-coil region spans residues 206 to 233 (LRNSLPLRKELDRLKNELSELLQLSDIR).

Expressed in peripheral blood leukocytes, mainly in T-lymphocytes.

The protein resides in the mitochondrion. In terms of biological role, may regulate T-cell apoptosis. In Mus musculus (Mouse), this protein is T-cell activation inhibitor, mitochondrial (TCAIM).